A 338-amino-acid chain; its full sequence is Phenylalanine--tRNA ligase alpha subunit (338 aa).

Glutamate 259 is a binding site for Mg(2+).

The protein belongs to the class-II aminoacyl-tRNA synthetase family. Phe-tRNA synthetase alpha subunit type 1 subfamily. In terms of assembly, tetramer of two alpha and two beta subunits. It depends on Mg(2+) as a cofactor.

It localises to the cytoplasm. It carries out the reaction tRNA(Phe) + L-phenylalanine + ATP = L-phenylalanyl-tRNA(Phe) + AMP + diphosphate + H(+). The polypeptide is Phenylalanine--tRNA ligase alpha subunit (Janthinobacterium sp. (strain Marseille) (Minibacterium massiliensis)).